The sequence spans 493 residues: Glutamate--tRNA ligase (493 aa).

Residues 10-20 (PSPTGFVHIGS) carry the 'HIGH' region motif. Cys114, Cys116, Cys141, and Glu143 together coordinate Zn(2+). The 'KMSKS' region signature appears at 258–262 (KLSKR). An ATP-binding site is contributed by Lys261.

This sequence belongs to the class-I aminoacyl-tRNA synthetase family. Glutamate--tRNA ligase type 1 subfamily. Monomer. The cofactor is Zn(2+).

The protein localises to the cytoplasm. It catalyses the reaction tRNA(Glu) + L-glutamate + ATP = L-glutamyl-tRNA(Glu) + AMP + diphosphate. Its function is as follows. Catalyzes the attachment of glutamate to tRNA(Glu) in a two-step reaction: glutamate is first activated by ATP to form Glu-AMP and then transferred to the acceptor end of tRNA(Glu). This Alkaliphilus metalliredigens (strain QYMF) protein is Glutamate--tRNA ligase.